The following is a 230-amino-acid chain: MADLSFYVGVIGNVISVLVFLSPVETFWRIVQRRSTEEYECFPYICTLMSSSLWTYYGIVTPGEYLVSTVNGFGALAESIYVLIFLFFVPKSRFLKTVVVVLALNVCFPVIAIAGTRTLFGDANSRSSSMGFICATLNIIMYGSPLSAIKTVVTTRSVQFMPFWLSFFLFLNGAIWGVYALLLHDMFLLVPNGMGFFLGIMQLLIYAYYRNAEPIVEDEEGLIPNQPLLA.

Residues 1 to 3 (MAD) are Extracellular-facing. A helical membrane pass occupies residues 4 to 24 (LSFYVGVIGNVISVLVFLSPV). The MtN3/slv 1 domain maps to 6-92 (FYVGVIGNVI…LIFLFFVPKS (87 aa)). At 25–40 (ETFWRIVQRRSTEEYE) the chain is on the cytoplasmic side. Residues 41–61 (CFPYICTLMSSSLWTYYGIVT) traverse the membrane as a helical segment. Residues 62 to 69 (PGEYLVST) lie on the Extracellular side of the membrane. Residues 70-90 (VNGFGALAESIYVLIFLFFVP) traverse the membrane as a helical segment. The Cytoplasmic portion of the chain corresponds to 91–93 (KSR). A helical membrane pass occupies residues 94–114 (FLKTVVVVLALNVCFPVIAIA). Residues 115-128 (GTRTLFGDANSRSS) are Extracellular-facing. Residues 129 to 149 (SMGFICATLNIIMYGSPLSAI) form a helical membrane-spanning segment. The region spanning 129–212 (SMGFICATLN…LLIYAYYRNA (84 aa)) is the MtN3/slv 2 domain. Topologically, residues 150–162 (KTVVTTRSVQFMP) are cytoplasmic. A helical transmembrane segment spans residues 163–183 (FWLSFFLFLNGAIWGVYALLL). Residues 184 to 185 (HD) lie on the Extracellular side of the membrane. The helical transmembrane segment at 186–206 (MFLLVPNGMGFFLGIMQLLIY) threads the bilayer. Topologically, residues 207 to 230 (AYYRNAEPIVEDEEGLIPNQPLLA) are cytoplasmic.

This sequence belongs to the SWEET sugar transporter family. As to quaternary structure, forms homooligomers and heterooligomers with SWEET1, SWEET7, SWEET8, SWEET9 and SWEET17. Mostly expressed in the cortex of mature roots, and, to a lower extent, in aerial organs such as leaves, stems, and flowers. Mainly present in vascular parenchyma cells, especially in the petiole vasculature, flower stalks and at the base of individual, not fully developed flowers.

Its subcellular location is the vacuole membrane. Mediates both low-affinity uptake and efflux of sugar across the vacuolar membrane. Regulates sugars homeostasis in leaves and roots by exporting/importing them through the tonoplast regarding metabolic demand. Acts as a vacuolar hexose transporter, such as glucose (Glc), fructose (Fru), and sucrose (Suc). This chain is Bidirectional sugar transporter SWEET16, found in Arabidopsis thaliana (Mouse-ear cress).